Reading from the N-terminus, the 213-residue chain is MAKNYYDITLALAGICQSARLVQQLAHQGHCDADALHVSLNSIIDMNPSSTLAVFGGSEANLRVGLETLLGVLNASSRQGLNAELTRYTLSLMVLERKLSSAKGALDTLGNRINGLQRQLEHFDLQSETLMSAMAAIYVDVISPLGPRIQVTGSPAVLQSPQVQAKVRATLLAGIRAAVLWHQVGGGRLQLMFSRNRLTTQAKQILAHLTPEL.

Residues 79-126 (QGLNAELTRYTLSLMVLERKLSSAKGALDTLGNRINGLQRQLEHFDLQ) adopt a coiled-coil conformation.

It belongs to the HflD family.

It is found in the cytoplasm. The protein resides in the cell inner membrane. The polypeptide is High frequency lysogenization protein HflD homolog (Shigella dysenteriae serotype 1 (strain Sd197)).